Reading from the N-terminus, the 66-residue chain is Large ribosomal subunit protein bL35 (66 aa).

The protein belongs to the bacterial ribosomal protein bL35 family.

The protein is Large ribosomal subunit protein bL35 of Ruegeria pomeroyi (strain ATCC 700808 / DSM 15171 / DSS-3) (Silicibacter pomeroyi).